The primary structure comprises 562 residues: Protein wntless (562 aa).

Topologically, residues 1–13 are cytoplasmic; sequence MSGTILENLSGRK. A helical membrane pass occupies residues 14–34; it reads LSILVGSLLLCQVLCFLLGGL. Topologically, residues 35 to 239 are lumenal; that stretch reads YAPVPAGHTN…AIHQNGGFTH (205 aa). Asparagine 58 is a glycosylation site (N-linked (GlcNAc...) asparagine). The chain crosses the membrane as a helical span at residues 240–260; sequence VWLMLKTLLFPFVVGIMVWFW. Residues 261–270 lie on the Cytoplasmic side of the membrane; the sequence is RRVHLLQRSP. A helical membrane pass occupies residues 271 to 291; that stretch reads ALLEYMLLYLGGALTFLNLPL. The Lumenal portion of the chain corresponds to 292-311; the sequence is EYLSLTIEMPYMLLLSDIRQ. The helical transmembrane segment at 312–332 threads the bilayer; the sequence is GIFYAMLLSFWLVFAGEHMLI. Residues 333 to 344 lie on the Cytoplasmic side of the membrane; sequence QDSHNKSTIRSR. Residues 345–365 form a helical membrane-spanning segment; sequence YWKHLSAVVVGCISLFVFDIS. The Lumenal segment spans residues 366-386; it reads ERGVQLRNPFYSIWTTPLGAK. Residues 387 to 407 form a helical membrane-spanning segment; the sequence is VAMSFILLAGVSAAVYFLFLC. Topologically, residues 408–441 are cytoplasmic; that stretch reads YMISKVFKNIGDKRTSLPSMSQARRLHYEGLIYR. A helical membrane pass occupies residues 442-462; the sequence is FKFLMLATLLCAALTVTGFIM. Topologically, residues 463–482 are lumenal; the sequence is GQMAEGQWKWNDDVEIQLTS. The chain crosses the membrane as a helical span at residues 483–503; it reads AFLTGVYGMWNIYIFALLILY. The Cytoplasmic portion of the chain corresponds to 504-562; the sequence is APSHKQWPTMHHSDETTQSNENIVASAASEEIEFSNLPSDSNPSEISSLTSFTRKVAFE. Residues 538 to 562 form a disordered region; the sequence is SNLPSDSNPSEISSLTSFTRKVAFE. Positions 539 to 556 are enriched in polar residues; it reads NLPSDSNPSEISSLTSFT.

It belongs to the wntless family. As to quaternary structure, interacts with wg; in the Golgi. Interacts with Vps35, a component of the retromer complex; wls stability is regulated by Vps35.

It localises to the presynaptic cell membrane. Its subcellular location is the postsynaptic cell membrane. The protein localises to the cell membrane. The protein resides in the endoplasmic reticulum membrane. It is found in the endosome membrane. It localises to the golgi apparatus membrane. In terms of biological role, a segment polarity gene required for wingless (wg)-dependent patterning processes, acting in both wg-sending cells and wg-target cells. In non-neuronal cells wls directs wg secretion. The wls traffic loop encompasses the Golgi, the cell surface, an endocytic compartment and a retrograde route leading back to the Golgi, and involves clathrin-mediated endocytosis and the retromer complex (a conserved protein complex consisting of Vps35 and Vps26). In neuronal cells (the larval motorneuron NMJ), the wg signal moves across the synapse via the release of wls-containing exosome-like vesicles. Postsynaptic wls is required for the trafficking of fz2 through the fz2-interacting protein Grip. This chain is Protein wntless, found in Drosophila persimilis (Fruit fly).